Reading from the N-terminus, the 117-residue chain is Large ribosomal subunit protein bL20 (117 aa).

The protein belongs to the bacterial ribosomal protein bL20 family.

In terms of biological role, binds directly to 23S ribosomal RNA and is necessary for the in vitro assembly process of the 50S ribosomal subunit. It is not involved in the protein synthesizing functions of that subunit. The protein is Large ribosomal subunit protein bL20 of Chromohalobacter salexigens (strain ATCC BAA-138 / DSM 3043 / CIP 106854 / NCIMB 13768 / 1H11).